The primary structure comprises 355 residues: Guanine nucleotide-binding protein G(o) subunit alpha (355 aa).

Low complexity predominate over residues 1–17 (MGCASSAEERAAPSAQQ). The tract at residues 1–24 (MGCASSAEERAAPSAQQADREKLK) is disordered. Gly-2 carries the N-myristoyl glycine lipid modification. Cys-3 carries S-palmitoyl cysteine lipidation. Positions 32 to 355 (KDIKLLLLGA…ANNLRGCGLY (324 aa)) constitute a G-alpha domain. The G1 motif stretch occupies residues 35–48 (KLLLLGAGESGKST). Residues 40–47 (GAGESGKS), 176–182 (LRTRVKT), 201–205 (DVGRG), 201–206 (DVGRGQ), 271–274 (NKKD), and Ala-327 contribute to the GTP site. Mg(2+)-binding residues include Ser-47 and Thr-182. The segment at 174–182 (DILRTRVKT) is G2 motif. Residues 197–206 (FKLFDVGRGQ) form a G3 motif region. The tract at residues 267–274 (ILFLNKKD) is G4 motif. Residues 326–330 (TATDT) are G5 motif.

This sequence belongs to the G-alpha family. G(i/o/t/z) subfamily. As to quaternary structure, g proteins are composed of 3 units; alpha, beta and gamma. The alpha chain contains the guanine nucleotide binding site.

Guanine nucleotide-binding proteins (G proteins) are involved as modulators or transducers in various transmembrane signaling systems. The G(o) protein function is not clear. In Manduca sexta (Tobacco hawkmoth), this protein is Guanine nucleotide-binding protein G(o) subunit alpha.